The sequence spans 311 residues: tRNA-cytidine(32) 2-sulfurtransferase (311 aa).

Positions serine 47–serine 52 match the PP-loop motif motif. Cysteine 122, cysteine 125, and cysteine 213 together coordinate [4Fe-4S] cluster.

Belongs to the TtcA family. As to quaternary structure, homodimer. The cofactor is Mg(2+). Requires [4Fe-4S] cluster as cofactor.

The protein resides in the cytoplasm. The catalysed reaction is cytidine(32) in tRNA + S-sulfanyl-L-cysteinyl-[cysteine desulfurase] + AH2 + ATP = 2-thiocytidine(32) in tRNA + L-cysteinyl-[cysteine desulfurase] + A + AMP + diphosphate + H(+). The protein operates within tRNA modification. Functionally, catalyzes the ATP-dependent 2-thiolation of cytidine in position 32 of tRNA, to form 2-thiocytidine (s(2)C32). The sulfur atoms are provided by the cysteine/cysteine desulfurase (IscS) system. The protein is tRNA-cytidine(32) 2-sulfurtransferase of Escherichia coli O127:H6 (strain E2348/69 / EPEC).